The following is a 320-amino-acid chain: MIRRIGVLTSGGDAPGMNAAIRGVVRAALTEGLEVYGIYDGYQGLYEDRMEQLDRYSVSDVINRGGTFLGSARFPQFRDEAVRQVCVENMKRRGLDALVVIGGDGSYMGAKRLTEMGFPCIGLPGTIDNDVAGTDYTIGYFTALETVLEAIDRLRDTSSSHQRISIVEVMGRHCGDLTLAAAIAGGCEFIVLPEVPFSPEDLVCEIKAGIEKGKKHAIVAITELVCDVDELAKYIEKETGRETRATVLGHIQRGGSPVAYDRILASRMGAYSIELLQQGYGGRCVGIQNEKMVHHDIVDAIENMKRPFKGDWLDTAKKLF.

Glycine 12 is a binding site for ATP. ADP contacts are provided by residues 22-26 (RGVVR) and 55-60 (RYSVSD). ATP contacts are provided by residues 73 to 74 (RF) and 103 to 106 (GDGS). Position 104 (aspartate 104) interacts with Mg(2+). 126–128 (TID) contributes to the substrate binding site. The active-site Proton acceptor is aspartate 128. Residue arginine 155 participates in ADP binding. Residues arginine 163 and 170–172 (MGR) contribute to the substrate site. ADP contacts are provided by residues 186–188 (GCE), lysine 212, and 214–216 (KKH). Substrate-binding positions include glutamate 223, arginine 244, and 250–253 (HIQR).

It belongs to the phosphofructokinase type A (PFKA) family. ATP-dependent PFK group I subfamily. Prokaryotic clade 'B1' sub-subfamily. As to quaternary structure, homotetramer. It depends on Mg(2+) as a cofactor.

It is found in the cytoplasm. It carries out the reaction beta-D-fructose 6-phosphate + ATP = beta-D-fructose 1,6-bisphosphate + ADP + H(+). The protein operates within carbohydrate degradation; glycolysis; D-glyceraldehyde 3-phosphate and glycerone phosphate from D-glucose: step 3/4. With respect to regulation, allosterically activated by ADP and other diphosphonucleosides, and allosterically inhibited by phosphoenolpyruvate. In terms of biological role, catalyzes the phosphorylation of D-fructose 6-phosphate to fructose 1,6-bisphosphate by ATP, the first committing step of glycolysis. In Pectobacterium carotovorum subsp. carotovorum (strain PC1), this protein is ATP-dependent 6-phosphofructokinase.